A 750-amino-acid chain; its full sequence is Photosystem I P700 chlorophyll a apoprotein A1 (750 aa).

8 consecutive transmembrane segments (helical) span residues 70-93 (VFSA…FHGA), 156-179 (LYCT…FHYH), 195-219 (LNHH…HVSL), 291-309 (IAHH…GHMY), 346-369 (WHAQ…HHMY), 385-411 (LSLF…IFMV), 433-455 (AIIS…LYIH), and 531-549 (FLVH…LILL). [4Fe-4S] cluster contacts are provided by Cys-573 and Cys-582. 2 consecutive transmembrane segments (helical) span residues 589–610 (HVFL…HFSW) and 664–686 (LSAY…MFLF). His-675 contributes to the chlorophyll a' binding site. Met-683 and Tyr-691 together coordinate chlorophyll a. Trp-692 is a binding site for phylloquinone. The helical transmembrane segment at 724 to 744 (AVGVTHYLLGGIATTWAFFLA) threads the bilayer.

This sequence belongs to the PsaA/PsaB family. In terms of assembly, the PsaA/B heterodimer binds the P700 chlorophyll special pair and subsequent electron acceptors. PSI consists of a core antenna complex that captures photons, and an electron transfer chain that converts photonic excitation into a charge separation. The eukaryotic PSI reaction center is composed of at least 11 subunits. It depends on P700 is a chlorophyll a/chlorophyll a' dimer, A0 is one or more chlorophyll a, A1 is one or both phylloquinones and FX is a shared 4Fe-4S iron-sulfur center. as a cofactor.

The protein localises to the plastid. The protein resides in the chloroplast thylakoid membrane. It carries out the reaction reduced [plastocyanin] + hnu + oxidized [2Fe-2S]-[ferredoxin] = oxidized [plastocyanin] + reduced [2Fe-2S]-[ferredoxin]. Functionally, psaA and PsaB bind P700, the primary electron donor of photosystem I (PSI), as well as the electron acceptors A0, A1 and FX. PSI is a plastocyanin-ferredoxin oxidoreductase, converting photonic excitation into a charge separation, which transfers an electron from the donor P700 chlorophyll pair to the spectroscopically characterized acceptors A0, A1, FX, FA and FB in turn. Oxidized P700 is reduced on the lumenal side of the thylakoid membrane by plastocyanin. The polypeptide is Photosystem I P700 chlorophyll a apoprotein A1 (Coffea arabica (Arabian coffee)).